The primary structure comprises 358 residues: Heterogeneous nuclear ribonucleoprotein A2 homolog 2 (358 aa).

RRM domains follow at residues 9 to 92 (RKLF…ESAK) and 100 to 179 (KKLF…LSKQ). Disordered stretches follow at residues 182–217 (QDVQNTRNNRGGNFGFGDSRGGGNFGSGPGGNFRGG) and 333–358 (YGGGNYGPGNGSGASGGGGYGGRNRY). The segment covering 193–217 (GNFGFGDSRGGGNFGSGPGGNFRGG) has biased composition (gly residues). Residues 309-352 (QQSSSYGPMKSGGNFGGNRSMGGPYGGGNYGPGNGSGASGGGGY) are nuclear targeting sequence.

The protein resides in the nucleus. Functionally, forms complexes (ribonucleosomes) with at least 20 other different hnRNP and heterogeneous nuclear RNA in the nucleus. The polypeptide is Heterogeneous nuclear ribonucleoprotein A2 homolog 2 (Xenopus laevis (African clawed frog)).